The sequence spans 289 residues: Nucleotide-binding protein CHY_0272 (289 aa).

Residue 8-15 coordinates ATP; the sequence is GLSGAGKT. 59–62 contacts GTP; sequence DVRG.

Belongs to the RapZ-like family.

Displays ATPase and GTPase activities. The protein is Nucleotide-binding protein CHY_0272 of Carboxydothermus hydrogenoformans (strain ATCC BAA-161 / DSM 6008 / Z-2901).